The following is a 313-amino-acid chain: Olfactory receptor 1J1 (313 aa).

The Extracellular portion of the chain corresponds to Met1–Gly25. Asn5 carries N-linked (GlcNAc...) asparagine glycosylation. Residues Ile26–Ile46 traverse the membrane as a helical segment. Residues Leu47–Thr57 lie on the Cytoplasmic side of the membrane. The chain crosses the membrane as a helical span at residues Pro58–Val78. Residues Pro79–Cys97 are Extracellular-facing. Residues Cys97 and Cys189 are joined by a disulfide bond. The chain crosses the membrane as a helical span at residues Val98 to Met118. Residues Ala119–Ala142 are Cytoplasmic-facing. Residues Met143–Leu163 form a helical membrane-spanning segment. Topologically, residues Asp164–Gln196 are extracellular. A helical transmembrane segment spans residues Leu197 to Ser217. The Cytoplasmic segment spans residues Tyr218–Thr240. Residues Cys241 to Leu261 traverse the membrane as a helical segment. Residues Pro262–Asn271 are Extracellular-facing. Residues Ile272 to Leu292 traverse the membrane as a helical segment. Residues Arg293–Lys313 lie on the Cytoplasmic side of the membrane.

It belongs to the G-protein coupled receptor 1 family.

Its subcellular location is the cell membrane. In terms of biological role, odorant receptor. In Mus musculus (Mouse), this protein is Olfactory receptor 1J1.